The following is a 134-amino-acid chain: MILACDVGLKRIGIAALLNGVILPLEAILRQNRNQASRDLSDLLREKNIQVLVVGKPNESYADTNARIEHFIKLVDFKGEIVFINEDNSSIEAYENLEHLGKKNKWLAIKDGRLDSLSACRILERYCQQVLKNH.

This sequence belongs to the YqgF nuclease family.

It localises to the cytoplasm. In terms of biological role, could be a nuclease involved in processing of the 5'-end of pre-16S rRNA. This chain is Putative pre-16S rRNA nuclease, found in Helicobacter pylori (strain HPAG1).